The sequence spans 63 residues: Anaphase-promoting complex subunit 13 (63 aa).

A disordered region spans residues 36-63; sequence KTDDTEETNQETQQADAETWRDLALDTQ. Positions 53-63 are enriched in basic and acidic residues; it reads ETWRDLALDTQ.

Belongs to the APC13 family. As to quaternary structure, component of the anaphase promoting complex/cyclosome (APC/C) complex. In terms of tissue distribution, expressed constitutively in roots, leaves, stems, buds, flowers, and seeds.

It is found in the nucleus. It functions in the pathway protein modification; protein ubiquitination. Functionally, component of the anaphase promoting complex/cyclosome (APC/C), a cell cycle-regulated E3 ubiquitin ligase that controls progression through mitosis and the G1 phase of the cell cycle. The APC/C complex acts by mediating ubiquitination and subsequent degradation of target proteins. Regulates global growth and development, including phyllotaxis and apical dominance. Required for pollen maturation. Promotes (pri) miRNA transcription of each MIR159 genes. This chain is Anaphase-promoting complex subunit 13, found in Arabidopsis thaliana (Mouse-ear cress).